The sequence spans 1085 residues: MPKRTDISNILLIGSGPIVIGQACEFDYSGTQSCKTLKSLGYRVILINSNPATVMTDPEFSHQTYIQPITPENIATIIEKEKIDAILPTMGGQTALNAVMQMHQKGMLEGVELLGAKIEAIKKGEDRQAFKEAMLKIGMDLPKGRYAYTELEALEAINEIGFPAIIRASFTLAGGGSGVAYNIEEFQELAKNALDASPINEILIEESLLGWKEYEMEVIRDSKDNCIIVCCIENIDPMGVHTGDSITIAPSLTLTDKEYQRMRDASFAILREIGVDTGGSNVQFAIHPETLRMVVIEMNPRVSRSSALASKATGFPIAKVATMLAVGFSLDEIQNDITNTPASFEPSLDYIVVKIPRFAFEKFAGVSSTLGTSMKSIGEVMAIGGNFLEALQKALCSLENNWLGFESLSKDLEAIKKEIRRPNPKRLLYIADAFRLGVCVDEVFELCQIDRWFLSQIQKLVEVEESINSSVLTDAKKLRGLKNLGFSDARIAAKIKENENLEVSPFEVELARSNLQIVPNFEEVDTCAAEFLSLTPYLYSTYAPNPLPPIENKQEKKEKKILIIGSGPNRIGQGIEFDYCCVHASLALKDLNIKSVMFNCNPETVSTDYDTSDTLYFEPIHFECVKSIIQRERVDGIIVHFGGQTPLKLAKDLAKMQAPIIGTPFKVIDIAEDREKFSLFLKELDIKQPKNGMAKSVDEAYSIANVIGFPIIVRPSYVLGGQHMQILENIEELRHYLESVTHALEISPKNPLLIDKFLEKAVELDVDAICDKKEVYIAGILQHIEEAGIHSGDSACFIPSTLSPEILDEIERVSAKIALHLGVVGLLNIQFAVHQNSLYLIEVNPRASRTVPFLSKALGVPLAKVATRVMVLEDLKEALKFYDKKNIVGYSKGVYKPKMPHFVALKEAVFPFNKLYGSDLILGPEMKSTGEVMGIARSLGLAFFKAQTACFNPIKNKGLIFVSIKDKDKEEACVLMKRLVQLGFELCATEGTHKALEKAGVKSLKVLKISEGRPNIMDLMMNGEISMAINTSDHKSQDDAKLIRASVLKNHVSYFTTLSTIEVLLLALEESSKEDELLALQDYLK.

Positions 1–399 are carboxyphosphate synthetic domain; it reads MPKRTDISNI…ALQKALCSLE (399 aa). The ATP site is built by Arg-127, Arg-167, Gly-174, Glu-206, Leu-208, Glu-213, Gly-239, Val-240, His-241, Gln-283, and Glu-297. One can recognise an ATP-grasp 1 domain in the interval 131 to 326; that stretch reads KEAMLKIGMD…IAKVATMLAV (196 aa). 3 residues coordinate Mg(2+): Gln-283, Glu-297, and Asn-299. Mn(2+) is bound by residues Gln-283, Glu-297, and Asn-299. The segment at 400–552 is oligomerization domain; it reads NNWLGFESLS…APNPLPPIEN (153 aa). Residues 553–951 are carbamoyl phosphate synthetic domain; sequence KQEKKEKKIL…AFFKAQTACF (399 aa). Residues 678-871 enclose the ATP-grasp 2 domain; the sequence is SLFLKELDIK…LAKVATRVMV (194 aa). Positions 714, 756, 758, 763, 788, 789, 790, 791, 830, and 842 each coordinate ATP. Residues Gln-830, Glu-842, and Asn-844 each coordinate Mg(2+). The Mn(2+) site is built by Gln-830, Glu-842, and Asn-844. The MGS-like domain maps to 952–1085; the sequence is NPIKNKGLIF…ELLALQDYLK (134 aa). The allosteric domain stretch occupies residues 952–1085; the sequence is NPIKNKGLIF…ELLALQDYLK (134 aa).

It belongs to the CarB family. Composed of two chains; the small (or glutamine) chain promotes the hydrolysis of glutamine to ammonia, which is used by the large (or ammonia) chain to synthesize carbamoyl phosphate. Tetramer of heterodimers (alpha,beta)4. Mg(2+) serves as cofactor. Mn(2+) is required as a cofactor.

The catalysed reaction is hydrogencarbonate + L-glutamine + 2 ATP + H2O = carbamoyl phosphate + L-glutamate + 2 ADP + phosphate + 2 H(+). It catalyses the reaction hydrogencarbonate + NH4(+) + 2 ATP = carbamoyl phosphate + 2 ADP + phosphate + 2 H(+). The protein operates within amino-acid biosynthesis; L-arginine biosynthesis; carbamoyl phosphate from bicarbonate: step 1/1. It functions in the pathway pyrimidine metabolism; UMP biosynthesis via de novo pathway; (S)-dihydroorotate from bicarbonate: step 1/3. Large subunit of the glutamine-dependent carbamoyl phosphate synthetase (CPSase). CPSase catalyzes the formation of carbamoyl phosphate from the ammonia moiety of glutamine, carbonate, and phosphate donated by ATP, constituting the first step of 2 biosynthetic pathways, one leading to arginine and/or urea and the other to pyrimidine nucleotides. The large subunit (synthetase) binds the substrates ammonia (free or transferred from glutamine from the small subunit), hydrogencarbonate and ATP and carries out an ATP-coupled ligase reaction, activating hydrogencarbonate by forming carboxy phosphate which reacts with ammonia to form carbamoyl phosphate. This Helicobacter pylori (strain ATCC 700392 / 26695) (Campylobacter pylori) protein is Carbamoyl phosphate synthase large chain.